Reading from the N-terminus, the 82-residue chain is Ubiquinol-cytochrome-c reductase complex assembly factor 3 (82 aa).

The Mitochondrial matrix portion of the chain corresponds to 1–6 (METVRR). A helical membrane pass occupies residues 7-29 (IVKGTLLLGFCTGIGGDLWVLVA). Over 30–82 (PGQERRLEMRMNYPEANPPMLAEAHKRNEMVLKVIEESAKTNENMARRSPWSS) the chain is Mitochondrial intermembrane.

Belongs to the UQCC3 family. Associates with the ubiquinol-cytochrome c reductase complex (mitochondrial respiratory chain complex III or cytochrome b-c1 complex).

The protein resides in the mitochondrion inner membrane. In terms of biological role, required for the assembly of the ubiquinol-cytochrome c reductase complex (mitochondrial respiratory chain complex III or cytochrome b-c1 complex), mediating cytochrome b recruitment and probably stabilization within the complex. Thereby, plays an important role in ATP production by mitochondria. Cardiolipin-binding protein, it may also control the cardiolipin composition of mitochondria membranes and their morphology. In Xenopus laevis (African clawed frog), this protein is Ubiquinol-cytochrome-c reductase complex assembly factor 3.